Consider the following 459-residue polypeptide: Bifunctional protein GlmU (459 aa).

The tract at residues 1–229 (MSNFAIILAA…FDESLGVNDR (229 aa)) is pyrophosphorylase. UDP-N-acetyl-alpha-D-glucosamine is bound by residues 8–11 (LAAG), K22, Q72, and 77–78 (GT). A Mg(2+)-binding site is contributed by D102. Positions 139, 154, 169, and 227 each coordinate UDP-N-acetyl-alpha-D-glucosamine. Position 227 (N227) interacts with Mg(2+). Residues 230 to 250 (VALATAESVMRRRINHKHMVN) form a linker region. An N-acetyltransferase region spans residues 251-459 (GVSFVNPEAT…TRLPHHPKNQ (209 aa)). UDP-N-acetyl-alpha-D-glucosamine contacts are provided by R332 and K350. H362 (proton acceptor) is an active-site residue. UDP-N-acetyl-alpha-D-glucosamine is bound by residues Y365 and N376. Residues A379, 385–386 (NY), S404, A422, and R439 contribute to the acetyl-CoA site.

The protein in the N-terminal section; belongs to the N-acetylglucosamine-1-phosphate uridyltransferase family. This sequence in the C-terminal section; belongs to the transferase hexapeptide repeat family. As to quaternary structure, homotrimer. Mg(2+) is required as a cofactor.

The protein resides in the cytoplasm. The enzyme catalyses alpha-D-glucosamine 1-phosphate + acetyl-CoA = N-acetyl-alpha-D-glucosamine 1-phosphate + CoA + H(+). It carries out the reaction N-acetyl-alpha-D-glucosamine 1-phosphate + UTP + H(+) = UDP-N-acetyl-alpha-D-glucosamine + diphosphate. Its pathway is nucleotide-sugar biosynthesis; UDP-N-acetyl-alpha-D-glucosamine biosynthesis; N-acetyl-alpha-D-glucosamine 1-phosphate from alpha-D-glucosamine 6-phosphate (route II): step 2/2. The protein operates within nucleotide-sugar biosynthesis; UDP-N-acetyl-alpha-D-glucosamine biosynthesis; UDP-N-acetyl-alpha-D-glucosamine from N-acetyl-alpha-D-glucosamine 1-phosphate: step 1/1. It functions in the pathway bacterial outer membrane biogenesis; LPS lipid A biosynthesis. Functionally, catalyzes the last two sequential reactions in the de novo biosynthetic pathway for UDP-N-acetylglucosamine (UDP-GlcNAc). The C-terminal domain catalyzes the transfer of acetyl group from acetyl coenzyme A to glucosamine-1-phosphate (GlcN-1-P) to produce N-acetylglucosamine-1-phosphate (GlcNAc-1-P), which is converted into UDP-GlcNAc by the transfer of uridine 5-monophosphate (from uridine 5-triphosphate), a reaction catalyzed by the N-terminal domain. This is Bifunctional protein GlmU from Streptococcus pneumoniae (strain Taiwan19F-14).